The following is a 370-amino-acid chain: Biotin synthase (370 aa).

Residues 50–276 form the Radical SAM core domain; sequence FSDGTVDACS…IAVYRFLHPE (227 aa). [4Fe-4S] cluster contacts are provided by cysteine 68, cysteine 72, and cysteine 75. Cysteine 208 and arginine 280 together coordinate [2Fe-2S] cluster. The tract at residues 328–370 is disordered; sequence AGLEPNREANTFDPESVKARHRSPAAETASNANRTNATTETDD. Over residues 352 to 370 the composition is skewed to low complexity; the sequence is AAETASNANRTNATTETDD.

It belongs to the radical SAM superfamily. Biotin synthase family. In terms of assembly, homodimer. [4Fe-4S] cluster serves as cofactor. The cofactor is [2Fe-2S] cluster.

It catalyses the reaction (4R,5S)-dethiobiotin + (sulfur carrier)-SH + 2 reduced [2Fe-2S]-[ferredoxin] + 2 S-adenosyl-L-methionine = (sulfur carrier)-H + biotin + 2 5'-deoxyadenosine + 2 L-methionine + 2 oxidized [2Fe-2S]-[ferredoxin]. It participates in cofactor biosynthesis; biotin biosynthesis; biotin from 7,8-diaminononanoate: step 2/2. Functionally, catalyzes the conversion of dethiobiotin (DTB) to biotin by the insertion of a sulfur atom into dethiobiotin via a radical-based mechanism. In Natronomonas pharaonis (strain ATCC 35678 / DSM 2160 / CIP 103997 / JCM 8858 / NBRC 14720 / NCIMB 2260 / Gabara) (Halobacterium pharaonis), this protein is Biotin synthase.